We begin with the raw amino-acid sequence, 102 residues long: ATP-dependent Clp protease adapter protein ClpS (102 aa).

Positions 1 to 18 (MSQFDHQHLSDTEEKQEL) are enriched in basic and acidic residues. A disordered region spans residues 1–21 (MSQFDHQHLSDTEEKQELKPP).

The protein belongs to the ClpS family. In terms of assembly, binds to the N-terminal domain of the chaperone ClpA.

Functionally, involved in the modulation of the specificity of the ClpAP-mediated ATP-dependent protein degradation. This is ATP-dependent Clp protease adapter protein ClpS from Idiomarina loihiensis (strain ATCC BAA-735 / DSM 15497 / L2-TR).